We begin with the raw amino-acid sequence, 340 residues long: Ketol-acid reductoisomerase (NADP(+)) (340 aa).

The region spanning 2 to 181 (AKVFYNGDIN…GSARAGVIET (180 aa)) is the KARI N-terminal Rossmann domain. Residues 25-28 (YGSQ), Arg48, Ser52, and 82-85 (DEHQ) contribute to the NADP(+) site. His107 is a catalytic residue. Gly133 is an NADP(+) binding site. The KARI C-terminal knotted domain occupies 182-327 (TFQEETETDL…RELREMMPFV (146 aa)). Positions 190, 194, 226, and 230 each coordinate Mg(2+). Ser251 is a binding site for substrate.

Belongs to the ketol-acid reductoisomerase family. Mg(2+) serves as cofactor.

It catalyses the reaction (2R)-2,3-dihydroxy-3-methylbutanoate + NADP(+) = (2S)-2-acetolactate + NADPH + H(+). The catalysed reaction is (2R,3R)-2,3-dihydroxy-3-methylpentanoate + NADP(+) = (S)-2-ethyl-2-hydroxy-3-oxobutanoate + NADPH + H(+). Its pathway is amino-acid biosynthesis; L-isoleucine biosynthesis; L-isoleucine from 2-oxobutanoate: step 2/4. It participates in amino-acid biosynthesis; L-valine biosynthesis; L-valine from pyruvate: step 2/4. Its function is as follows. Involved in the biosynthesis of branched-chain amino acids (BCAA). Catalyzes an alkyl-migration followed by a ketol-acid reduction of (S)-2-acetolactate (S2AL) to yield (R)-2,3-dihydroxy-isovalerate. In the isomerase reaction, S2AL is rearranged via a Mg-dependent methyl migration to produce 3-hydroxy-3-methyl-2-ketobutyrate (HMKB). In the reductase reaction, this 2-ketoacid undergoes a metal-dependent reduction by NADPH to yield (R)-2,3-dihydroxy-isovalerate. The chain is Ketol-acid reductoisomerase (NADP(+)) from Halalkalibacterium halodurans (strain ATCC BAA-125 / DSM 18197 / FERM 7344 / JCM 9153 / C-125) (Bacillus halodurans).